The sequence spans 48 residues: Gas vesicle protein A (48 aa).

This sequence belongs to the gas vesicle GvpA family. As to quaternary structure, the gas vesicle shell is 2 nm thick and consists of a single layer of this protein. It forms helical ribs nearly perpendicular to the long axis of the vesicle.

Its subcellular location is the gas vesicle shell. Gas vesicles are hollow, gas filled proteinaceous nanostructures found in some microorganisms. During planktonic growth they allow positioning of the organism at a favorable depth for light or nutrient acquisition. GvpA forms the protein shell. The protein is Gas vesicle protein A of Spirulina sp. (strain CCAP 1475/10).